A 90-amino-acid polypeptide reads, in one-letter code: Envelope glycoprotein N (90 aa).

Positions 1 to 21 (MTWKLFICFLSFGVIFLRVSS) are cleaved as a signal peptide. The Virion surface portion of the chain corresponds to 22–55 (LTEKSHTTSYTILHNNNFYSNSCSADTYVPSIKT). A helical membrane pass occupies residues 56–76 (FSSVWAILNVIIFFCASLFYL). Topologically, residues 77-90 (RHLCIVKFISNLTK) are intravirion.

This sequence belongs to the herpesviridae glycoprotein N family. As to quaternary structure, interacts (via N-terminus) with gM (via N-terminus). The gM-gN heterodimer forms the gCII complex.

Its subcellular location is the virion membrane. The protein resides in the host membrane. The protein localises to the host Golgi apparatus. It localises to the host trans-Golgi network. Functionally, envelope glycoprotein necessary for proper maturation of gM and modulation of its membrane fusion activity. Also plays a critical role in virion morphogenesis. This is Envelope glycoprotein N from Saimiriine herpesvirus 2 (strain 11) (SaHV-2).